The primary structure comprises 367 residues: Alginate lyase (367 aa).

The first 24 residues, 1 to 24 (MTAFKRIFSPALLVLALYGGAAHA), serve as a signal peptide directing secretion. Residues 63–64 (SK), 136–137 (HT), and Tyr254 contribute to the substrate site.

This sequence belongs to the polysaccharide lyase 5 family.

The protein localises to the periplasm. The enzyme catalyses Eliminative cleavage of alginate to give oligosaccharides with 4-deoxy-alpha-L-erythro-hex-4-enuronosyl groups at their non-reducing ends and beta-D-mannuronate at their reducing end.. Functionally, catalyzes the depolymerization of alginate by cleaving the beta-1,4 glycosidic bond between two adjacent sugar residues via a beta-elimination mechanism. May serve to degrade mislocalized alginate that is trapped in the periplasmic space. The polypeptide is Alginate lyase (Pseudomonas putida (strain W619)).